The sequence spans 542 residues: TOM1-like protein 7 (542 aa).

A VHS domain is found at 29 to 158 (ATSELLRTPD…ELKRCGVKFP (130 aa)). Residue Ser-161 is modified to Phosphoserine. The region spanning 201–289 (EIESLSLSSL…VLARHDAIAS (89 aa)) is the GAT domain. The tract at residues 303–340 (RETSSSLKTCGAAALESADSESSSSSSSSESETDEVED) is disordered. Positions 314–332 (AAALESADSESSSSSSSSE) are enriched in low complexity. Position 521 is a phosphoserine (Ser-521). Residues 522 to 542 (FPARATGTSGAATAATVDRQP) form a disordered region. Residues 524 to 542 (ARATGTSGAATAATVDRQP) are compositionally biased toward low complexity.

The protein belongs to the TOM1 family. As to expression, preferentially expressed in flowers.

Its subcellular location is the membrane. Its function is as follows. Might contribute to the loading of the ESCRT machinery. The polypeptide is TOM1-like protein 7 (Arabidopsis thaliana (Mouse-ear cress)).